The primary structure comprises 250 residues: Small ribosomal subunit protein uS2 (250 aa).

It belongs to the universal ribosomal protein uS2 family.

The protein is Small ribosomal subunit protein uS2 of Polaromonas naphthalenivorans (strain CJ2).